Here is a 671-residue protein sequence, read N- to C-terminus: MGQVHLHNRSFNKATSAGFLIALGIVYGDIGTSPLYAMQAIVRGQGGLANLSESFILGAVSLVIWTLTLITTVKYVLIALKADNHHEGGIFSLFTLVRRMRKWLIVPAMIGGATLLADGALTPAVTVTSAIEGLRGVTHVYSNQTTVMVTTLIILAFLFLIQRFGASLVGRLFGPIMFIWFGFLGVSGLINSFLDLSILKAINPYYAIHLLFSPENKAGFFILGSIFLVTTGAEALYSDLGHVGRGNIYVSWPFVKICIILSYCGQGAWLLAHRGEHIEKLNPFFAVLPDNMVIYVVILSTLAAIIASQALISGSFTLVSEAIRLKLLPLFKIYYPGQTLGQLYIPAVNFALWVTTSFFVLYFKTSEHMEAAYSLAITITMLMTTTLLTYFLIQKGTPKIAIAFISIGLFCIEGSFFAASLVQFINGAYIVVLIALAIIFVMFIWNKSHKIVMKYIKSLNINEYKNQLNALRHDESYDLYQTNVVYLTSKMDHEWIDRSILYSILDKRPKRAECYWFVNVKVTDEPYTSEYKVDMMDTDFIVRVNLYLGFRMRQEVPRYLRTIVTDLMESGRLPRQHQHYSITPGRKVGDFRFVVVEEKLMNARQMPGFERFVLQTKAQIKRITASPIRWFGLQFSEVTVETVPLVLSDVRNLEIHERLEQVDETEAPATN.

Helical transmembrane passes span 18–38, 60–80, 103–123, 149–169, 173–193, 218–238, 252–272, 292–312, 343–363, 373–393, 402–422, and 424–444; these read GFLI…LYAM, VSLV…LIAL, WLIV…ALTP, VTTL…ASLV, FGPI…INSF, AGFF…ALYS, WPFV…WLLA, MVIY…QALI, LYIP…VLYF, YSLA…YFLI, IAFI…ASLV, and FING…VMFI.

The protein belongs to the HAK/KUP transporter (TC 2.A.72) family.

It localises to the cell membrane. It carries out the reaction K(+)(in) + H(+)(in) = K(+)(out) + H(+)(out). In terms of biological role, transport of potassium into the cell. Likely operates as a K(+):H(+) symporter. The protein is Probable potassium transport system protein Kup 2 of Lactococcus lactis subsp. cremoris (strain MG1363).